A 482-amino-acid chain; its full sequence is E1B 55 kDa protein (482 aa).

A disordered region spans residues 73-94; sequence VLDSGEGPSCADDRDKQEKKES. The span at 83–94 shows a compositional bias: basic and acidic residues; it reads ADDRDKQEKKES. 2 positions are modified to phosphoserine: Ser476 and Ser477.

Belongs to the adenoviridae E1B 55 kDa protein family. In terms of assembly, interacts with host PML-4 and PML-5; this interaction promotes efficient subnuclear targeting of E1B-55K to PML nuclear bodies. Interacts with E4-ORF3 protein. Interacts with E4-ORF6 protein.

It localises to the host nucleus. The protein localises to the host cytoplasm. Functionally, plays a major role to prevent cellular inhibition of viral genome replication. Assembles an SCF-like E3 ubiquitin ligase complex based on the cellular proteins ELOB, ELOC, CUL5 and RBX1, in cooperation with viral E4orf6. This viral RING-type ligase ubiquitinates cellular substrates and targets them to proteasomal degradation: TP53/p53, LIG4, MRE11-RAD50-NBS1 (MRN) complex, ITGA3, DAXX and BLM. E1B-55K probably acts as the substrate-specific adapter of the SCF-like E3 ubiquitin ligase complex. Degradation of host TP53/p53 activity is essential for preventing E1A-induced TP53 accumulation that would otherwise lead to cell apoptosis and growth arrest. E1B-55K also inactivates TP53 transcription-factor activity by binding its transactivation domain. E1B-55K also functions as a SUMO1 E3 ligase for TP53 which causes the latter to be sequestered in promyelocytic leukemia (PML) nuclear bodies thereby contributing to maximal inhibition of TP53 function. The polypeptide is E1B 55 kDa protein (Homo sapiens (Human)).